A 98-amino-acid polypeptide reads, in one-letter code: Co-chaperonin GroES (98 aa).

It belongs to the GroES chaperonin family. As to quaternary structure, heptamer of 7 subunits arranged in a ring. Interacts with the chaperonin GroEL.

It is found in the cytoplasm. Functionally, together with the chaperonin GroEL, plays an essential role in assisting protein folding. The GroEL-GroES system forms a nano-cage that allows encapsulation of the non-native substrate proteins and provides a physical environment optimized to promote and accelerate protein folding. GroES binds to the apical surface of the GroEL ring, thereby capping the opening of the GroEL channel. This Leifsonia xyli subsp. xyli (strain CTCB07) protein is Co-chaperonin GroES.